A 148-amino-acid polypeptide reads, in one-letter code: Snaclec stejaggregin-A subunit beta-3 (148 aa).

The N-terminal stretch at 1-23 (MGRFISVSFGLLVVFLSLSGAGA) is a signal peptide. A disulfide bridge connects residues Cys27 and Cys38. Residues 34 to 145 (YDLYCYKVFK…CSRTHYVVCK (112 aa)) enclose the C-type lectin domain. Residues Asn47 and Asn78 are each glycosylated (N-linked (GlcNAc...) asparagine). 2 disulfide bridges follow: Cys55–Cys144 and Cys121–Cys136.

It belongs to the snaclec family. Heteromultimer; disulfide-linked. In terms of tissue distribution, expressed by the venom gland.

Its subcellular location is the secreted. In terms of biological role, interferes with one step of hemostasis (modulation of platelet aggregation, or coagulation cascade, for example). The polypeptide is Snaclec stejaggregin-A subunit beta-3 (Trimeresurus stejnegeri (Chinese green tree viper)).